The primary structure comprises 153 residues: Large ribosomal subunit protein bL9 (153 aa).

Belongs to the bacterial ribosomal protein bL9 family.

In terms of biological role, binds to the 23S rRNA. This is Large ribosomal subunit protein bL9 from Mycoplasma mycoides subsp. mycoides SC (strain CCUG 32753 / NCTC 10114 / PG1).